A 208-amino-acid chain; its full sequence is ATP phosphoribosyltransferase (208 aa).

It belongs to the ATP phosphoribosyltransferase family. Short subfamily. As to quaternary structure, heteromultimer composed of HisG and HisZ subunits.

It is found in the cytoplasm. It catalyses the reaction 1-(5-phospho-beta-D-ribosyl)-ATP + diphosphate = 5-phospho-alpha-D-ribose 1-diphosphate + ATP. Its pathway is amino-acid biosynthesis; L-histidine biosynthesis; L-histidine from 5-phospho-alpha-D-ribose 1-diphosphate: step 1/9. Functionally, catalyzes the condensation of ATP and 5-phosphoribose 1-diphosphate to form N'-(5'-phosphoribosyl)-ATP (PR-ATP). Has a crucial role in the pathway because the rate of histidine biosynthesis seems to be controlled primarily by regulation of HisG enzymatic activity. The protein is ATP phosphoribosyltransferase of Clostridioides difficile (strain 630) (Peptoclostridium difficile).